The following is an 823-amino-acid chain: Valine--tRNA ligase (823 aa).

ATP is bound at residue K547.

This sequence belongs to the class-I aminoacyl-tRNA synthetase family. ValS type 2 subfamily.

The protein localises to the cytoplasm. It carries out the reaction tRNA(Val) + L-valine + ATP = L-valyl-tRNA(Val) + AMP + diphosphate. In terms of biological role, catalyzes the attachment of valine to tRNA(Val). As ValRS can inadvertently accommodate and process structurally similar amino acids such as threonine, to avoid such errors, it has a 'posttransfer' editing activity that hydrolyzes mischarged Thr-tRNA(Val) in a tRNA-dependent manner. This is Valine--tRNA ligase (valS) from Aeropyrum pernix (strain ATCC 700893 / DSM 11879 / JCM 9820 / NBRC 100138 / K1).